A 318-amino-acid polypeptide reads, in one-letter code: UDP-N-acetylenolpyruvoylglucosamine reductase (318 aa).

One can recognise an FAD-binding PCMH-type domain in the interval 38–204 (IGGICPVVVE…LGIEILLKEG (167 aa)). R182 is a catalytic residue. The segment at 212–232 (SLKDKRDRRNSSQPENKKSAG) is disordered. Positions 213–229 (LKDKRDRRNSSQPENKK) are enriched in basic and acidic residues. S233 acts as the Proton donor in catalysis. E310 is a catalytic residue.

The protein belongs to the MurB family. The cofactor is FAD.

The protein localises to the cytoplasm. The catalysed reaction is UDP-N-acetyl-alpha-D-muramate + NADP(+) = UDP-N-acetyl-3-O-(1-carboxyvinyl)-alpha-D-glucosamine + NADPH + H(+). It functions in the pathway cell wall biogenesis; peptidoglycan biosynthesis. Cell wall formation. The chain is UDP-N-acetylenolpyruvoylglucosamine reductase from Leptospira borgpetersenii serovar Hardjo-bovis (strain JB197).